A 357-amino-acid polypeptide reads, in one-letter code: Chorismate synthase (357 aa).

Residue Arg-46 coordinates NADP(+). Residues 123–125 (RSS), 235–236 (NA), Gly-275, 290–294 (KPTPS), and Arg-316 contribute to the FMN site.

Belongs to the chorismate synthase family. As to quaternary structure, homotetramer. It depends on FMNH2 as a cofactor.

The catalysed reaction is 5-O-(1-carboxyvinyl)-3-phosphoshikimate = chorismate + phosphate. Its pathway is metabolic intermediate biosynthesis; chorismate biosynthesis; chorismate from D-erythrose 4-phosphate and phosphoenolpyruvate: step 7/7. Its function is as follows. Catalyzes the anti-1,4-elimination of the C-3 phosphate and the C-6 proR hydrogen from 5-enolpyruvylshikimate-3-phosphate (EPSP) to yield chorismate, which is the branch point compound that serves as the starting substrate for the three terminal pathways of aromatic amino acid biosynthesis. This reaction introduces a second double bond into the aromatic ring system. In Sulfurovum sp. (strain NBC37-1), this protein is Chorismate synthase.